The chain runs to 269 residues: 5'-nucleotidase SurE (269 aa).

A divalent metal cation is bound by residues Asp-11, Asp-12, Ser-43, and Asn-101.

It belongs to the SurE nucleotidase family. It depends on a divalent metal cation as a cofactor.

Its subcellular location is the cytoplasm. It carries out the reaction a ribonucleoside 5'-phosphate + H2O = a ribonucleoside + phosphate. Nucleotidase that shows phosphatase activity on nucleoside 5'-monophosphates. The polypeptide is 5'-nucleotidase SurE (Prochlorococcus marinus (strain AS9601)).